The chain runs to 382 residues: Gap junction alpha-1 protein (382 aa).

The Cytoplasmic segment spans residues Gly-2–Lys-23. Ser-5 carries the phosphoserine modification. Residues Val-24–Ala-44 traverse the membrane as a helical segment. The Extracellular portion of the chain corresponds to Trp-45–Arg-76. 2 disulfides stabilise this stretch: Cys-54–Cys-192 and Cys-187–Cys-198. The chain crosses the membrane as a helical span at residues Phe-77 to Phe-97. Residues Tyr-98–Tyr-155 are Cytoplasmic-facing. Lys-144 participates in a covalent cross-link: Glycyl lysine isopeptide (Lys-Gly) (interchain with G-Cter in SUMO). Residues Ile-156 to Ile-176 form a helical membrane-spanning segment. Over Tyr-177 to Thr-207 the chain is Extracellular. The helical transmembrane segment at Ile-208–Leu-228 threads the bilayer. Over Phe-229–Ile-382 the chain is Cytoplasmic. Residue Lys-237 forms a Glycyl lysine isopeptide (Lys-Gly) (interchain with G-Cter in SUMO) linkage. Residues Ser-244–Ile-382 form an interaction with NOV region. The residue at position 247 (Tyr-247) is a Phosphotyrosine. 3 positions are modified to phosphoserine: Ser-255, Ser-257, and Ser-262. The segment at Lys-264 to Ile-382 is interaction with UBQLN4. Cys-271 carries the post-translational modification S-nitrosocysteine. A Phosphothreonine modification is found at Thr-275. A phosphoserine mark is found at Ser-306, Ser-314, and Ser-325. Residues Gln-317–Ala-332 are compositionally biased toward polar residues. Positions Gln-317 to Ile-382 are disordered. At Thr-326 the chain carries Phosphothreonine. 4 positions are modified to phosphoserine: Ser-328, Ser-330, Ser-341, and Ser-365. A compositionally biased stretch (low complexity) spans Arg-362–Arg-374. Ser-368 carries the post-translational modification Phosphoserine; by PKC/PRKCG and PKC/PRKCD. Phosphoserine is present on residues Ser-369 and Ser-373.

It belongs to the connexin family. Alpha-type (group II) subfamily. As to quaternary structure, a connexon is composed of a hexamer of connexins. Interacts with CSNK1D. Interacts with RIC1/CIP150. Interacts (via C-terminus) with TJP1. Interacts (via C-terminus) with SRC (via SH3 domain). Interacts (not ubiquitinated) with UBQLN4 (via UBA domain). Interacts with CNST. Interacts with SGSM3. Interacts with NOV. Interacts with TMEM65. Interacts with ANK3/ANKG and PKP2. Phosphorylation at Ser-325, Ser-328 and Ser-330 by CK1 modulates gap junction assembly. Phosphorylated at Ser-368 by PRKCG; phosphorylation induces disassembly of gap junction plaques and inhibition of gap junction activity. Phosphorylation at Ser-368 by PRKCD triggers its internalization into small vesicles leading to proteasome-mediated degradation. Post-translationally, sumoylated with SUMO1, SUMO2 and SUMO3, which may regulate the level of functional Cx43 gap junctions at the plasma membrane. May be desumoylated by SENP1 or SENP2. In terms of processing, acetylated in the developing cortex; leading to delocalization from the cell membrane. S-nitrosylation at Cys-271 is enriched at the muscle endothelial gap junction in arteries, it augments channel permeability and may regulate of smooth muscle cell to endothelial cell communication. Expressed in heart, non-sensory epithelial cells, and in fibrocytes of the spiral ligament and the spiral limbus. Expressed in bladder smooth muscle cells (at protein level). Expressed in astrocytes (at protein level).

Its subcellular location is the cell membrane. It localises to the cell junction. It is found in the gap junction. The protein localises to the endoplasmic reticulum. Its function is as follows. Gap junction protein that acts as a regulator of bladder capacity. A gap junction consists of a cluster of closely packed pairs of transmembrane channels, the connexons, through which materials of low MW diffuse from one cell to a neighboring cell. Negative regulator of bladder functional capacity: acts by enhancing intercellular electrical and chemical transmission, thus sensitizing bladder muscles to cholinergic neural stimuli and causing them to contract. May play a role in cell growth inhibition through the regulation of NOV expression and localization. Plays an essential role in gap junction communication in the ventricles. Connexin 43 is possibly the ATP-induced pore of mouse macrophages. This is Gap junction alpha-1 protein (Gja1) from Mus musculus (Mouse).